Here is a 1467-residue protein sequence, read N- to C-terminus: Neuropathy target esterase sws (1467 aa).

Topologically, residues 1–34 (MDVLEMLRASASGSYNTIFSDAWCQYVSKQITAT) are lumenal. A helical membrane pass occupies residues 35–55 (MYMYCAFGLMGVLFLAWFMYF). The Cytoplasmic segment spans residues 56–1467 (KRLARLRLRD…RSSTYNETKN (1412 aa)). 174–301 (IFGHFEKPIF…IRVIQVIMIR (128 aa)) provides a ligand contact to a nucleoside 3',5'-cyclic phosphate. Disordered stretches follow at residues 332–353 (TMSG…ANGP) and 372–416 (MGMG…SVHG). A compositionally biased stretch (low complexity) spans 339–350 (SQTSQSSRQATA). S450 and S459 each carry phosphoserine. A nucleoside 3',5'-cyclic phosphate contacts are provided by residues 488–615 (ELGL…VVRR) and 604–731 (IVLD…LSHR). The PNPLA domain maps to 958-1124 (LVLGGGGARG…VNNLPGHLWR (167 aa)). The GXGXXG motif lies at 962 to 967 (GGGARG). The GXSXG signature appears at 989 to 993 (GVSIG). S991 serves as the catalytic Nucleophile. Residue D1111 is the Proton acceptor of the active site. The DGA/G motif lies at 1111–1113 (DGG). S1205 is subject to Phosphoserine. The tract at residues 1377 to 1467 (RKMDKSTQST…RSSTYNETKN (91 aa)) is disordered. A compositionally biased stretch (polar residues) spans 1382–1393 (STQSTPPTSSRA). Basic and acidic residues-rich tracts occupy residues 1396–1406 (RGKEEARHMDN) and 1448–1458 (LADKDEDKENR).

The protein belongs to the NTE family. As to quaternary structure, interacts with Pka-C3; interaction inhibits the catalytic function of Pka-C3 and the esterase activity of sws.

The protein resides in the endoplasmic reticulum membrane. It carries out the reaction a 1-acyl-sn-glycero-3-phosphocholine + H2O = sn-glycerol 3-phosphocholine + a fatty acid + H(+). Its function is as follows. Phospholipase B that deacylates intracellular phosphatidylcholine (PtdCho), generating glycerophosphocholine (GroPtdCho). This deacylation occurs at both sn-2 and sn-1 positions of PtdCho. Its specific chemical modification by certain organophosphorus (OP) compounds leads to distal axonopathy. Plays a role in the signaling mechanism between neurons and glia that regulates glia wrapping during development of the adult brain. Essential for membrane lipid homeostasis and cell survival in both neurons and glia of the adult brain. This Drosophila yakuba (Fruit fly) protein is Neuropathy target esterase sws.